The chain runs to 345 residues: Phenylalanine--tRNA ligase alpha subunit (345 aa).

Glutamate 262 provides a ligand contact to Mg(2+).

It belongs to the class-II aminoacyl-tRNA synthetase family. Phe-tRNA synthetase alpha subunit type 1 subfamily. Tetramer of two alpha and two beta subunits. It depends on Mg(2+) as a cofactor.

It localises to the cytoplasm. The enzyme catalyses tRNA(Phe) + L-phenylalanine + ATP = L-phenylalanyl-tRNA(Phe) + AMP + diphosphate + H(+). The chain is Phenylalanine--tRNA ligase alpha subunit from Ehrlichia canis (strain Jake).